A 1161-amino-acid polypeptide reads, in one-letter code: DNA-directed RNA polymerase subunit beta' (1161 aa).

Zn(2+)-binding residues include Cys-60, Cys-62, Cys-75, and Cys-78. Mg(2+) contacts are provided by Asp-449, Asp-451, and Asp-453. Cys-790, Cys-864, Cys-871, and Cys-874 together coordinate Zn(2+).

The protein belongs to the RNA polymerase beta' chain family. The RNAP catalytic core consists of 2 alpha, 1 beta, 1 beta' and 1 omega subunit. When a sigma factor is associated with the core the holoenzyme is formed, which can initiate transcription. Requires Mg(2+) as cofactor. The cofactor is Zn(2+).

It catalyses the reaction RNA(n) + a ribonucleoside 5'-triphosphate = RNA(n+1) + diphosphate. Functionally, DNA-dependent RNA polymerase catalyzes the transcription of DNA into RNA using the four ribonucleoside triphosphates as substrates. The chain is DNA-directed RNA polymerase subunit beta' from Clostridioides difficile (strain 630) (Peptoclostridium difficile).